Here is a 141-residue protein sequence, read N- to C-terminus: Hemoglobin subunit alpha (141 aa).

The Globin domain occupies 1-141; it reads VLSPADKTNI…VSTVLTSKYR (141 aa). S3 carries the phosphoserine modification. K7 bears the N6-succinyllysine mark. A Phosphothreonine modification is found at T8. An N6-succinyllysine modification is found at K11. Position 16 is an N6-acetyllysine; alternate (K16). N6-succinyllysine; alternate is present on K16. Position 24 is a phosphotyrosine (Y24). At S35 the chain carries Phosphoserine. N6-succinyllysine is present on K40. S49 is modified (phosphoserine). Position 58 (H58) interacts with O2. A heme b-binding site is contributed by H87. A Phosphoserine modification is found at S102. At T108 the chain carries Phosphothreonine. Phosphoserine is present on S124. 2 positions are modified to phosphothreonine: T134 and T137. S138 is subject to Phosphoserine.

Belongs to the globin family. Heterotetramer of two alpha chains and two beta chains. Red blood cells.

Involved in oxygen transport from the lung to the various peripheral tissues. Its function is as follows. Hemopressin acts as an antagonist peptide of the cannabinoid receptor CNR1. Hemopressin-binding efficiently blocks cannabinoid receptor CNR1 and subsequent signaling. The protein is Hemoglobin subunit alpha (HBA) of Canis lupus familiaris (Dog).